The chain runs to 347 residues: D-alanine--D-alanine ligase (347 aa).

The ATP-grasp domain occupies 133–342 (KQAFAQASLP…FPDLVHRLIQ (210 aa)). ATP is bound at residue 169–224 (ETELGYPCFVKPANLGSSVGIAKVRDRAELEAALDQAAALDRRLIIEAAIDNPREV). Mg(2+) contacts are provided by Asp-296, Glu-309, and Asn-311.

Belongs to the D-alanine--D-alanine ligase family. Requires Mg(2+) as cofactor. It depends on Mn(2+) as a cofactor.

It is found in the cytoplasm. It carries out the reaction 2 D-alanine + ATP = D-alanyl-D-alanine + ADP + phosphate + H(+). It participates in cell wall biogenesis; peptidoglycan biosynthesis. Cell wall formation. The protein is D-alanine--D-alanine ligase of Synechococcus elongatus (strain ATCC 33912 / PCC 7942 / FACHB-805) (Anacystis nidulans R2).